Consider the following 124-residue polypeptide: Fluoride-specific ion channel FluC (124 aa).

4 helical membrane passes run 1 to 21 (MFNL…RHLT), 35 to 55 (WGTM…IAIL), 66 to 86 (LFVA…SLDF), and 99 to 119 (FGYA…GLWL). Residues G74 and T77 each contribute to the Na(+) site.

This sequence belongs to the fluoride channel Fluc/FEX (TC 1.A.43) family.

It is found in the cell inner membrane. It catalyses the reaction fluoride(in) = fluoride(out). With respect to regulation, na(+) is not transported, but it plays an essential structural role and its presence is essential for fluoride channel function. Fluoride-specific ion channel. Important for reducing fluoride concentration in the cell, thus reducing its toxicity. The polypeptide is Fluoride-specific ion channel FluC (Mesorhizobium japonicum (strain LMG 29417 / CECT 9101 / MAFF 303099) (Mesorhizobium loti (strain MAFF 303099))).